A 179-amino-acid polypeptide reads, in one-letter code: Large ribosomal subunit protein uL5 (179 aa).

This sequence belongs to the universal ribosomal protein uL5 family. As to quaternary structure, part of the 50S ribosomal subunit; part of the 5S rRNA/L5/L18/L25 subcomplex. Contacts the 5S rRNA and the P site tRNA. Forms a bridge to the 30S subunit in the 70S ribosome.

Its function is as follows. This is one of the proteins that bind and probably mediate the attachment of the 5S RNA into the large ribosomal subunit, where it forms part of the central protuberance. In the 70S ribosome it contacts protein S13 of the 30S subunit (bridge B1b), connecting the 2 subunits; this bridge is implicated in subunit movement. Contacts the P site tRNA; the 5S rRNA and some of its associated proteins might help stabilize positioning of ribosome-bound tRNAs. This is Large ribosomal subunit protein uL5 from Bacillus cereus (strain Q1).